The chain runs to 404 residues: MCSIGEDDFGDEGAAHAMVVEALPLGIVLSPGNCSKCDVNSGELYKLNFRAAECRECFLTYARHKFRAALGAAKILPRNAEVLLVLDGSAKSLVLLDMLHFAQTQNQFKRLHCNARVVYVEEQQVQDRDPVDLEALLSLSVQYAPFDFYVIELGQGCSLQRIKDYSPSLKANNELIHKLQKLQSLTARQDYLQQQRKNLICSVAQSLQCTHVFEPNISVDLATQLLTAIALGRGASAALDVALLDDRLSGDVKLLRPLKDLSEQEIQFYIHAQRLKPLFQSGSHYGMERGPTASLQNLTSAFVANLQHNYASTVSTVFRTGDKIAVNSDPEQATCVHCQSALDSELSDTLLAIEYSRSVSEAGVSLYKNGQDLESLAKKRLEMQDGLCHACRAIQAELESGNLL.

Belongs to the CTU2/NCS2 family.

Its subcellular location is the cytoplasm. It functions in the pathway tRNA modification; 5-methoxycarbonylmethyl-2-thiouridine-tRNA biosynthesis. Plays a central role in 2-thiolation of mcm(5)S(2)U at tRNA wobble positions of tRNA(Lys), tRNA(Glu) and tRNA(Gln). May act by forming a heterodimer with NCS6/CTU1 that ligates sulfur from thiocarboxylated URM1 onto the uridine of tRNAs at wobble position. This Drosophila erecta (Fruit fly) protein is Cytoplasmic tRNA 2-thiolation protein 2.